Here is a 249-residue protein sequence, read N- to C-terminus: Ribosomal RNA small subunit methyltransferase J (249 aa).

S-adenosyl-L-methionine-binding positions include 99–100 (RD), 115–116 (ER), 151–152 (SS), and Asp-169.

It belongs to the methyltransferase superfamily. RsmJ family.

The protein localises to the cytoplasm. The enzyme catalyses guanosine(1516) in 16S rRNA + S-adenosyl-L-methionine = N(2)-methylguanosine(1516) in 16S rRNA + S-adenosyl-L-homocysteine + H(+). In terms of biological role, specifically methylates the guanosine in position 1516 of 16S rRNA. This Shewanella oneidensis (strain ATCC 700550 / JCM 31522 / CIP 106686 / LMG 19005 / NCIMB 14063 / MR-1) protein is Ribosomal RNA small subunit methyltransferase J.